We begin with the raw amino-acid sequence, 165 residues long: UI (165 aa).

An N-terminal signal peptide occupies residues 1-18; that stretch reads MKPVPLILLLATVLLSSH. The residue at position 163 (valine 163) is a Valine amide.

The protein belongs to the sauvagine/corticotropin-releasing factor/urotensin I family.

It is found in the secreted. Its function is as follows. Urotensin is found in the teleost caudal neurosecretory system. It has a suggested role in osmoregulation and as a corticotropin-releasing factor. The non-hormonal portion of this precursor may be a urotensin binding protein, urophysin. This is UI from Oncorhynchus mykiss (Rainbow trout).